A 545-amino-acid polypeptide reads, in one-letter code: Pseudouridylate synthase RPUSD2 (545 aa).

The interval 48-121 (GLRASHQQNG…PPPKKRRTGV (74 aa)) is disordered. S68 carries the phosphoserine modification. D274 is an active-site residue. Residue T477 is modified to Phosphothreonine.

The protein belongs to the pseudouridine synthase RluA family.

The enzyme catalyses a uridine in mRNA = a pseudouridine in mRNA. In terms of biological role, pseudouridine synthase that catalyzes pseudouridylation of mRNAs. The sequence is that of Pseudouridylate synthase RPUSD2 from Homo sapiens (Human).